The sequence spans 408 residues: uncharacterized protein (408 aa).

This is an uncharacterized protein from Methanocaldococcus jannaschii (strain ATCC 43067 / DSM 2661 / JAL-1 / JCM 10045 / NBRC 100440) (Methanococcus jannaschii).